A 429-amino-acid polypeptide reads, in one-letter code: Ribosomal RNA small subunit methyltransferase B (429 aa).

S-adenosyl-L-methionine is bound by residues 254–260 (CAAPGGK), D277, D303, and D322. The Nucleophile role is filled by C375. Residues 397–419 (ALSETGTPDQPGQQNLPGGEEGD) form a disordered region. A compositionally biased stretch (polar residues) spans 400-412 (ETGTPDQPGQQNL).

Belongs to the class I-like SAM-binding methyltransferase superfamily. RsmB/NOP family.

It localises to the cytoplasm. It catalyses the reaction cytidine(967) in 16S rRNA + S-adenosyl-L-methionine = 5-methylcytidine(967) in 16S rRNA + S-adenosyl-L-homocysteine + H(+). In terms of biological role, specifically methylates the cytosine at position 967 (m5C967) of 16S rRNA. The protein is Ribosomal RNA small subunit methyltransferase B of Salmonella choleraesuis (strain SC-B67).